The following is a 448-amino-acid chain: Asparagine--tRNA ligase (448 aa).

Belongs to the class-II aminoacyl-tRNA synthetase family. As to quaternary structure, homodimer.

The protein localises to the cytoplasm. It catalyses the reaction tRNA(Asn) + L-asparagine + ATP = L-asparaginyl-tRNA(Asn) + AMP + diphosphate + H(+). In Streptococcus pyogenes serotype M2 (strain MGAS10270), this protein is Asparagine--tRNA ligase.